The sequence spans 214 residues: Large ribosomal subunit protein uL16 (214 aa).

Position 32 is a citrulline (R32). K175 participates in a covalent cross-link: Glycyl lysine isopeptide (Lys-Gly) (interchain with G-Cter in SUMO2). A Glycyl lysine isopeptide (Lys-Gly) (interchain with G-Cter in ubiquitin) cross-link involves residue K188.

Belongs to the universal ribosomal protein uL16 family. In terms of assembly, component of the large ribosomal subunit. Mature ribosomes consist of a small (40S) and a large (60S) subunit. The 40S subunit contains about 33 different proteins and 1 molecule of RNA (18S). The 60S subunit contains about 49 different proteins and 3 molecules of RNA (28S, 5.8S and 5S). In terms of processing, citrullinated by PADI4. Post-translationally, ufmylated by UFL1.

The protein localises to the cytoplasm. Functionally, component of the large ribosomal subunit. Plays a role in the formation of actively translating ribosomes. May play a role in the embryonic brain development. The chain is Large ribosomal subunit protein uL16 from Pongo abelii (Sumatran orangutan).